We begin with the raw amino-acid sequence, 290 residues long: Bifunctional protein FolD (290 aa).

NADP(+)-binding positions include 174–176, I199, and I240; that span reads GHS.

This sequence belongs to the tetrahydrofolate dehydrogenase/cyclohydrolase family. Homodimer.

The catalysed reaction is (6R)-5,10-methylene-5,6,7,8-tetrahydrofolate + NADP(+) = (6R)-5,10-methenyltetrahydrofolate + NADPH. It catalyses the reaction (6R)-5,10-methenyltetrahydrofolate + H2O = (6R)-10-formyltetrahydrofolate + H(+). It functions in the pathway one-carbon metabolism; tetrahydrofolate interconversion. In terms of biological role, catalyzes the oxidation of 5,10-methylenetetrahydrofolate to 5,10-methenyltetrahydrofolate and then the hydrolysis of 5,10-methenyltetrahydrofolate to 10-formyltetrahydrofolate. This Methanosarcina acetivorans (strain ATCC 35395 / DSM 2834 / JCM 12185 / C2A) protein is Bifunctional protein FolD.